We begin with the raw amino-acid sequence, 123 residues long: MAITKEDILEAVGSLTVMELNDLVKAFEEKFGVSAAAVAVAGPAGAGAADAEEKTEFDVVLASAGDQKVGVIKVVRAITGLGLKEAKDIVDGAPKTIKEGVSKAEAEDIQKQLEAAGAKVEIK.

This sequence belongs to the bacterial ribosomal protein bL12 family. In terms of assembly, homodimer. Part of the ribosomal stalk of the 50S ribosomal subunit. Forms a multimeric L10(L12)X complex, where L10 forms an elongated spine to which 2 to 4 L12 dimers bind in a sequential fashion. Binds GTP-bound translation factors.

Functionally, forms part of the ribosomal stalk which helps the ribosome interact with GTP-bound translation factors. Is thus essential for accurate translation. This is Large ribosomal subunit protein bL12 from Neisseria gonorrhoeae (strain NCCP11945).